Reading from the N-terminus, the 322-residue chain is Atrochrysone carboxyl ACP thioesterase nsrC (322 aa).

Zn(2+) is bound by residues histidine 105, histidine 107, aspartate 109, and histidine 110. Aspartate 109 (proton donor/acceptor) is an active-site residue.

Belongs to the metallo-beta-lactamase superfamily. Zn(2+) is required as a cofactor.

The enzyme catalyses atrochrysone carboxyl-[ACP] + H2O = atrochrysone carboxylate + holo-[ACP] + H(+). The protein operates within secondary metabolite biosynthesis. Its function is as follows. Atrochrysone carboxyl ACP thioesterase; part of the gene cluster that mediates the biosynthesis of the tetrahydroxanthone dimer neosartorin, which exhibits antibacterial activity. The two different monomeric units appear to be synthesized by the same set of enzymes, among which the Baeyer-Villiger monooxygenase nsrF is the key enzyme for the divergence of the biosynthetic routes. The pathway begins with the synthesis of atrochrysone thioester by the polyketide synthase nsrB. The atrochrysone carboxyl ACP thioesterase nsrC then breaks the thioester bond and releases the atrochrysone carboxylic acid from AacuL. Atrochrysone carboxylic acid is decarboxylated by the decarboxylase nsrE, and oxidized by the anthrone oxygenase nsrD to yield emodin. Emodin is then reduced to emodin hydroquinone by the oxidoreductase nsrR. A-ring reduction by the short chain dehydrogenase nsrJ, dehydration by the scytalone dehydratase-like protein nsrI and probable spontaneous re-oxidation, results in overall deoxygenation to chrysophanol. The Baeyer-Villiger monooxygenase nsrF accepts chrysophanol as a substrate to insert one oxygen atom at two different positions to yield the precursors of both monomric units. NsrF is promiscuous/flexible in interacting with the 2 (non methylated and methylated) aromatic rings of chrysophanol, thus diverging the biosynthetic pathway at this point. After the hydrolysis of the lactones, methylesterification by the methyltransferase nsrG yields respectively moniliphenone and 2,2',6'-trihydroxy-4-methyl-6-methoxya-cyldiphenylmethanone. The next steps are the hydroxylation by the FAD-dependent monooxygenase nsrK, followed by isomerization by the monooxygenase nsrQ. The short chain dehydrogenase/reductase nsrO then catalyzes the C-5 ketoreduction to give the xanthone skeleton of blennolide C and 5-acetylblennolide A. The acetyltransferase nsrL has a strict substrate specificity and uses only blennolide A but not blennolide C to yield 5-acetylblennolide A as the single-acetylated product. In the final step of the biosynthesis, the heterodimerization of the 2 xanthones, blennolide C and 5-acetylblennolide A, is catalyzed by the cytochrome P450 monooxygenase nsrP. NsrP can utilize at least three different xanthones as its substrates to perform the dimerization reaction. The chain is Atrochrysone carboxyl ACP thioesterase nsrC from Aspergillus novofumigatus (strain IBT 16806).